Here is a 618-residue protein sequence, read N- to C-terminus: Proline--tRNA ligase (618 aa).

It belongs to the class-II aminoacyl-tRNA synthetase family. ProS type 1 subfamily. In terms of assembly, homodimer.

Its subcellular location is the cytoplasm. It carries out the reaction tRNA(Pro) + L-proline + ATP = L-prolyl-tRNA(Pro) + AMP + diphosphate. In terms of biological role, catalyzes the attachment of proline to tRNA(Pro) in a two-step reaction: proline is first activated by ATP to form Pro-AMP and then transferred to the acceptor end of tRNA(Pro). As ProRS can inadvertently accommodate and process non-cognate amino acids such as alanine and cysteine, to avoid such errors it has two additional distinct editing activities against alanine. One activity is designated as 'pretransfer' editing and involves the tRNA(Pro)-independent hydrolysis of activated Ala-AMP. The other activity is designated 'posttransfer' editing and involves deacylation of mischarged Ala-tRNA(Pro). The misacylated Cys-tRNA(Pro) is not edited by ProRS. The chain is Proline--tRNA ligase from Streptococcus pyogenes serotype M1.